The following is a 111-amino-acid chain: Large ribosomal subunit protein uL22 (111 aa).

Belongs to the universal ribosomal protein uL22 family. In terms of assembly, part of the 50S ribosomal subunit.

Functionally, this protein binds specifically to 23S rRNA; its binding is stimulated by other ribosomal proteins, e.g. L4, L17, and L20. It is important during the early stages of 50S assembly. It makes multiple contacts with different domains of the 23S rRNA in the assembled 50S subunit and ribosome. Its function is as follows. The globular domain of the protein is located near the polypeptide exit tunnel on the outside of the subunit, while an extended beta-hairpin is found that lines the wall of the exit tunnel in the center of the 70S ribosome. The chain is Large ribosomal subunit protein uL22 from Clostridium tetani (strain Massachusetts / E88).